A 309-amino-acid chain; its full sequence is uncharacterized protein (309 aa).

The S4 RNA-binding domain maps to 11 to 87 (QRLDTFLATL…FPLDILYEDE (77 aa)). Residue Asp131 is part of the active site.

This sequence belongs to the pseudouridine synthase RluA family.

It catalyses the reaction a uridine in RNA = a pseudouridine in RNA. This is an uncharacterized protein from Mycoplasma pneumoniae (strain ATCC 29342 / M129 / Subtype 1) (Mycoplasmoides pneumoniae).